We begin with the raw amino-acid sequence, 259 residues long: MELPNIIQQFIGNSVLEPNKIGQSPSDVYSFNRNNETFFLKRSSTLYTETTYSVSREAKMLSWLSEKLKVPELIMTFQDEQFEFMITKAINAKPISALFLTDQELLAIYKEALNLLNSIAIIDCPFISNIDHRLKESKFFIDNQLLDDIDQDDFDTELWGDHKTYLSLWNELTETRVEERLVFSHGDITDSNIFIDKFNEIYFLDLGRAGLADEFVDISFVERCLREDASEETAKIFLKHLKNDRPDKRNYFLKLDELN.

Asp187 serves as the catalytic Proton acceptor.

Belongs to the aminoglycoside phosphotransferase family.

It carries out the reaction kanamycin A + ATP = kanamycin 3'-phosphate + ADP + H(+). In terms of biological role, resistance to kanamycin and structurally-related aminoglycosides, including amikacin. The polypeptide is Aminoglycoside 3'-phosphotransferase (aphA-6) (Acinetobacter baumannii).